The following is a 353-amino-acid chain: Methylthioribose-1-phosphate isomerase (353 aa).

Substrate is bound by residues 51–53 (RGA), arginine 94, and glutamine 199. The Proton donor role is filled by aspartate 240. A substrate-binding site is contributed by 250–251 (NK).

This sequence belongs to the eIF-2B alpha/beta/delta subunits family. MtnA subfamily. Homodimer.

It catalyses the reaction 5-(methylsulfanyl)-alpha-D-ribose 1-phosphate = 5-(methylsulfanyl)-D-ribulose 1-phosphate. It functions in the pathway amino-acid biosynthesis; L-methionine biosynthesis via salvage pathway; L-methionine from S-methyl-5-thio-alpha-D-ribose 1-phosphate: step 1/6. Its function is as follows. Catalyzes the interconversion of methylthioribose-1-phosphate (MTR-1-P) into methylthioribulose-1-phosphate (MTRu-1-P). The polypeptide is Methylthioribose-1-phosphate isomerase (Bacillus licheniformis (strain ATCC 14580 / DSM 13 / JCM 2505 / CCUG 7422 / NBRC 12200 / NCIMB 9375 / NCTC 10341 / NRRL NRS-1264 / Gibson 46)).